Consider the following 377-residue polypeptide: T-protein (377 aa).

The Chorismate mutase domain maps to 1 to 92; the sequence is MSFMEALKDL…ESYANENQFG (92 aa). Residues 101–364 form the Prephenate/arogenate dehydrogenase domain; it reads HKIVIVGGYG…DYSEQFLKES (264 aa).

This sequence in the C-terminal section; belongs to the prephenate/arogenate dehydrogenase family.

The protein localises to the cytoplasm. The enzyme catalyses chorismate = prephenate. It carries out the reaction prephenate + NAD(+) = 3-(4-hydroxyphenyl)pyruvate + CO2 + NADH. The protein operates within amino-acid biosynthesis; L-tyrosine biosynthesis; (4-hydroxyphenyl)pyruvate from prephenate (NAD(+) route): step 1/1. It participates in metabolic intermediate biosynthesis; prephenate biosynthesis; prephenate from chorismate: step 1/1. The chain is T-protein (tyrA) from Haemophilus influenzae (strain ATCC 51907 / DSM 11121 / KW20 / Rd).